Consider the following 223-residue polypeptide: Small ribosomal subunit protein uS3 (223 aa).

Positions Val-39–Arg-107 constitute a KH type-2 domain.

The protein belongs to the universal ribosomal protein uS3 family. As to quaternary structure, part of the 30S ribosomal subunit. Forms a tight complex with proteins S10 and S14.

Binds the lower part of the 30S subunit head. Binds mRNA in the 70S ribosome, positioning it for translation. This is Small ribosomal subunit protein uS3 from Nitrosococcus oceani (strain ATCC 19707 / BCRC 17464 / JCM 30415 / NCIMB 11848 / C-107).